The sequence spans 256 residues: UPF0246 protein PG_1544 (256 aa).

Belongs to the UPF0246 family.

This is UPF0246 protein PG_1544 from Porphyromonas gingivalis (strain ATCC BAA-308 / W83).